The following is a 293-amino-acid chain: MATNQSISIFSSASLAVEYVDSLLPENPLQEPFKNAWNYMLNNYTKFQIATWGSLIVHEALYFFFCLPGFLFQFIPYMKKYKIQKDKPETWENQWKCFKVLLFNHFCIQFPLICGTYYFTEYFSIPYDWETMPRWYIALARCFGCAVIEDTWHYFLHRLLHHKRIYKYIHKIHHEFQAPFGMEAEYAHPLETLILGTGFFIGIMLLCDHVILLWAWVTVRLIETIDVHSGYDIPLNPLHLIPFYAGSRHHDFHHMNFIGNYASTFTWWDRIFGTDAQYNAYNEKRKKAEKKTE.

Helical transmembrane passes span 55 to 75 (LIVH…FQFI) and 100 to 120 (VLLF…YYFT). Residues 145 to 274 (CAVIEDTWHY…FTWWDRIFGT (130 aa)) enclose the Fatty acid hydroxylase domain. Positions 157–161 (HRLLH) match the Histidine box-1 motif. Residues 170–174 (HKIHH) carry the Histidine box-2 motif. Residues 199-219 (FFIGIMLLCDHVILLWAWVTV) form a helical membrane-spanning segment. Positions 249–255 (HHDFHHM) match the Histidine box-3 motif.

This sequence belongs to the sterol desaturase family. The cofactor is Fe cation. In terms of processing, ubiquitinated by MARCHF6, leading to proteasomal degradation.

The protein localises to the endoplasmic reticulum membrane. It carries out the reaction 4,4-dimethyl-5alpha-cholest-7-en-3beta-ol + 6 Fe(II)-[cytochrome b5] + 3 O2 + 5 H(+) = 4alpha-carboxy-4beta-methyl-5alpha-cholest-7-ene-3beta-ol + 6 Fe(III)-[cytochrome b5] + 4 H2O. The enzyme catalyses 4,4-dimethyl-5alpha-cholesta-8,24-dien-3beta-ol + 6 Fe(II)-[cytochrome b5] + 3 O2 + 5 H(+) = 4beta-methylzymosterol-4alpha-carboxylate + 6 Fe(III)-[cytochrome b5] + 4 H2O. It catalyses the reaction 4alpha-methylzymosterol + 6 Fe(II)-[cytochrome b5] + 3 O2 + 5 H(+) = 4alpha-carboxyzymosterol + 6 Fe(III)-[cytochrome b5] + 4 H2O. The catalysed reaction is 4alpha-methyl-5alpha-cholest-7-en-3beta-ol + 6 Fe(II)-[cytochrome b5] + 3 O2 + 5 H(+) = 4alpha-carboxy-5alpha-cholest-7-en-3beta-ol + 6 Fe(III)-[cytochrome b5] + 4 H2O. It carries out the reaction 4,4-dimethyl-5alpha-cholest-8-en-3beta-ol + 6 Fe(II)-[cytochrome b5] + 3 O2 + 5 H(+) = 4alpha-carboxy-4beta-methyl-5alpha-cholest-8-en-3beta-ol + 6 Fe(III)-[cytochrome b5] + 4 H2O. The enzyme catalyses 4alpha-methyl-5alpha-cholest-8-en-3beta-ol + 6 Fe(II)-[cytochrome b5] + 3 O2 + 5 H(+) = 4alpha-carboxy-5alpha-cholest-8-ene-3beta-ol + 6 Fe(III)-[cytochrome b5] + 4 H2O. It functions in the pathway steroid biosynthesis; zymosterol biosynthesis; zymosterol from lanosterol: step 3/6. It participates in steroid biosynthesis; cholesterol biosynthesis. Catalyzes the three-step monooxygenation required for the demethylation of 4,4-dimethyl and 4alpha-methylsterols, which can be subsequently metabolized to cholesterol. The polypeptide is Methylsterol monooxygenase 1 (MSMO1) (Sus scrofa (Pig)).